Here is a 511-residue protein sequence, read N- to C-terminus: MSEQTTTPEVDQTLDLNNEMQERRSKLAALRAQGNPFPNDFRRDSLSGDLHAEFGDKSADELAALGKRVKIAGRIMTRRIMGKASFATLQDMAGKIQVYVTRDDLPEGFYNEQFKKWDLGDIVGVEGTLFRTNTGELSVHVSDIRLLTKALRPLPEKHKGLTDQEARCRQRYLDLIANEESRKTFVTRTKVVAGIRKFLNDKRFMEVETPMMQVIPGGASARPFITHHNALDIDMYLRIAPELYLKRLVVGGFERVYEINRNFRNEGISVRHNPEFTMLEFYMAYADYIDLMDLTEEMLRTLAQDILGDTKIRYAKEGEEGLTIDFGQPFQRLSMVDSILKYNPDVTRDDLATLEKATAVAKRLHIELMKSWELGHVITAIFEETVEHMLLQPTFITEYPAAVSPLARRNDQNPDVTDRFEFFIGGRELANGFSELNDAEDQAERFQAQVDQKAAGDDEAMFYDADFVTALEHGLPPTAGQGIGIDRLVMLFTNSHTIRDVILFPALRPQK.

Mg(2+) is bound by residues Glu421 and Glu428.

The protein belongs to the class-II aminoacyl-tRNA synthetase family. Homodimer. Mg(2+) is required as a cofactor.

The protein resides in the cytoplasm. It carries out the reaction tRNA(Lys) + L-lysine + ATP = L-lysyl-tRNA(Lys) + AMP + diphosphate. The protein is Lysine--tRNA ligase of Aeromonas hydrophila subsp. hydrophila (strain ATCC 7966 / DSM 30187 / BCRC 13018 / CCUG 14551 / JCM 1027 / KCTC 2358 / NCIMB 9240 / NCTC 8049).